Here is a 397-residue protein sequence, read N- to C-terminus: uncharacterized protein (397 aa).

[4Fe-4S] cluster-binding residues include Cys-47, Cys-53, Cys-56, and Cys-131. 4 residues coordinate S-adenosyl-L-methionine: Gln-235, Phe-262, Glu-282, and Asp-328. The Nucleophile role is filled by Cys-354.

Belongs to the class I-like SAM-binding methyltransferase superfamily. RNA M5U methyltransferase family.

This is an uncharacterized protein from Zymomonas mobilis subsp. mobilis (strain ATCC 31821 / ZM4 / CP4).